Here is a 505-residue protein sequence, read N- to C-terminus: Phosphoethanolamine N-methyltransferase (505 aa).

The S-adenosyl-L-homocysteine site is built by Gly-76, Arg-81, Asp-97, Asp-122, Val-123, and Asn-141. Ser-174, Ser-179, Gly-180, Arg-184, and Tyr-191 together coordinate phosphocholine. N-methylethanolamine phosphate-binding positions include 260 to 261 (QY) and Tyr-269. Residue Tyr-269 participates in phosphocholine binding. 7 residues coordinate S-adenosyl-L-homocysteine: Val-278, Ser-279, Gly-305, Asp-327, Asp-353, Cys-354, and Arg-370. Phosphocholine-binding residues include Tyr-401, Tyr-415, Arg-419, Tyr-421, and Lys-487. Residues Tyr-401, Tyr-415, 419–421 (RGY), and Lys-487 each bind N-methylethanolamine phosphate.

The protein belongs to the class I-like SAM-binding methyltransferase superfamily. PEAMT family.

The catalysed reaction is phosphoethanolamine + S-adenosyl-L-methionine = N-methylethanolamine phosphate + S-adenosyl-L-homocysteine + H(+). The enzyme catalyses N-methylethanolamine phosphate + S-adenosyl-L-methionine = N,N-dimethylethanolamine phosphate + S-adenosyl-L-homocysteine + H(+). It carries out the reaction N,N-dimethylethanolamine phosphate + S-adenosyl-L-methionine = phosphocholine + S-adenosyl-L-homocysteine + H(+). It participates in phospholipid metabolism; phosphatidylcholine biosynthesis; phosphocholine from phosphoethanolamine: step 1/1. Its activity is regulated as follows. Inhibited by phosphatidic acid. Involved in phosphocholine biosynthesis. Catalyzes the N-methylation of phosphoethanolamine, phosphomonomethylethanolamine and phosphodimethylethanolamine, the three methylation steps required to convert phosphoethanolamine to phosphocholine (PC). The protein is Phosphoethanolamine N-methyltransferase of Triticum aestivum (Wheat).